The primary structure comprises 77 residues: MENFDKVKDIIVDRLGVDADKVTEDASFKDDLGADSLDIAELVMELEDEFGTEIPDEEAEKINTVGDAVKFINSLEK.

Residues 1–76 (MENFDKVKDI…DAVKFINSLE (76 aa)) enclose the Carrier domain. S36 carries the post-translational modification O-(pantetheine 4'-phosphoryl)serine.

It belongs to the acyl carrier protein (ACP) family. In terms of processing, 4'-phosphopantetheine is transferred from CoA to a specific serine of apo-ACP by AcpS. This modification is essential for activity because fatty acids are bound in thioester linkage to the sulfhydryl of the prosthetic group.

It is found in the cytoplasm. It participates in lipid metabolism; fatty acid biosynthesis. Functionally, carrier of the growing fatty acid chain in fatty acid biosynthesis. The polypeptide is Acyl carrier protein (Staphylococcus aureus (strain Mu3 / ATCC 700698)).